The sequence spans 1480 residues: Cystic fibrosis transmembrane conductance regulator (1480 aa).

Topologically, residues 1-77 are cytoplasmic; sequence MQRSPLEKAS…KLINALRRCF (77 aa). The chain crosses the membrane as a helical span at residues 78–98; sequence FWRFMFYGIFLYLGEVTKAVQ. The ABC transmembrane type-1 1 domain occupies 81–365; that stretch reads FMFYGIFLYL…WAVQTWYDSL (285 aa). Topologically, residues 99-122 are extracellular; it reads PLLLGRIIASYDPDNKEERSIAIY. The chain crosses the membrane as a helical span at residues 123 to 146; sequence LGIGLCLLFIVRTLLLHPAIFGLH. Topologically, residues 147–195 are cytoplasmic; sequence HIGMQMRIAMFSLIYKKTLKLSSRVLDKISIGQLVSLLSNNLNKFDEGL. The chain crosses the membrane as a helical span at residues 196–216; sequence ALAHFVWIAPLQVALLMGLIW. Topologically, residues 217 to 222 are extracellular; it reads ELLQAS. A helical membrane pass occupies residues 223–243; that stretch reads AFCGLGFLIVLALFQAGLGRM. The Cytoplasmic segment spans residues 244–298; sequence MMKYRDQRAGKISERLVITSEMIENIQSVKAYCWEEAMEKMIENLRQTELKLTRK. Residues 299–319 form a helical membrane-spanning segment; sequence AAYVRYFNSSAFFFSGFFVVF. The Extracellular portion of the chain corresponds to 320 to 339; sequence LSVLPYALIKGIILRKIFTT. Residues 340-358 traverse the membrane as a helical segment; that stretch reads ISFCIVLRMAVTRQFPWAV. Residues 359 to 858 are Cytoplasmic-facing; that stretch reads QTWYDSLGAI…YLRYITVHKS (500 aa). ATP-binding positions include tryptophan 401, serine 434, 458 to 465, and glutamine 493; that span reads GSTGAGKT. Positions 423–646 constitute an ABC transporter 1 domain; sequence NGDDSLFFSN…QPDFSSKLMG (224 aa). Cysteine 524 is lipidated: S-palmitoyl cysteine. Serine 549 carries the post-translational modification Phosphoserine. The tract at residues 654-831 is disordered R region; sequence SAERRNSILT…EEINEEDLKE (178 aa). Serine 660 and serine 670 each carry phosphoserine; by PKA. A Phosphoserine; by PKC modification is found at serine 686. A Glycyl lysine isopeptide (Lys-Gly) (interchain with G-Cter in ubiquitin) cross-link involves residue lysine 688. Phosphoserine; by PKA is present on residues serine 700 and serine 712. A Phosphothreonine modification is found at threonine 717. Serine 737, serine 753, and serine 768 each carry phosphoserine; by PKA. Serine 790 is subject to Phosphoserine; by PKC. Phosphoserine; by PKA occurs at positions 795 and 813. A helical membrane pass occupies residues 859-879; sequence LIFVLIWCLVIFLAEVAASLV. An ABC transmembrane type-1 2 domain is found at 859 to 1155; the sequence is LIFVLIWCLV…AVNSSIDVDS (297 aa). Over 880–918 the chain is Extracellular; sequence VLWLLGNTPLQDKGNSTHSRNNSYAVIITSTSSYYVFYI. N-linked (GlcNAc...) asparagine glycosylation is found at asparagine 894 and asparagine 900. Residues 919–939 traverse the membrane as a discontinuously helical segment; the sequence is YVGVADTLLAMGFFRGLPLVH. Topologically, residues 940–990 are cytoplasmic; the sequence is TLITVSKILHHKMLHSVLQAPMSTLNTLKAGGILNRFSKDIAILDDLLPLT. Residues 991–1011 traverse the membrane as a helical segment; the sequence is IFDFIQLLLIVIGAIAVVAVL. Over 1012–1013 the chain is Extracellular; the sequence is QP. The chain crosses the membrane as a helical span at residues 1014 to 1034; that stretch reads YIFVATVPVIVAFIMLRAYFL. At 1035–1095 the chain is on the cytoplasmic side; it reads QTSQQLKQLE…TANWFLYLST (61 aa). The chain crosses the membrane as a helical span at residues 1096-1116; sequence LRWFQMRIEMIFVIFFIAVTF. Over 1117–1130 the chain is Extracellular; it reads ISILTTGEGEGRVG. A helical membrane pass occupies residues 1131–1151; sequence IILTLAMNIMSTLQWAVNSSI. Residues 1152–1480 lie on the Cytoplasmic side of the membrane; the sequence is DVDSLMRSVS…TEEEVQDTRL (329 aa). One can recognise an ABC transporter 2 domain in the interval 1210-1443; the sequence is MTVKDLTAKY…RSLFRQAISP (234 aa). ATP contacts are provided by residues tyrosine 1219 and 1244–1251; that span reads GRTGSGKS. The interaction with GORASP2 stretch occupies residues 1386 to 1480; it reads RTLKQAFADC…TEEEVQDTRL (95 aa). Cysteine 1395 carries the S-palmitoyl cysteine lipid modification. Serine 1444 and serine 1456 each carry phosphoserine. Residues 1452-1480 form a disordered region; the sequence is HRNSSKCKSKPQIAALKEETEEEVQDTRL. Positions 1470-1480 are enriched in acidic residues; it reads ETEEEVQDTRL. The PDZ-binding motif lies at 1478–1480; sequence TRL.

The protein belongs to the ABC transporter superfamily. ABCC family. CFTR transporter (TC 3.A.1.202) subfamily. In terms of assembly, monomer; does not require oligomerization for channel activity. May form oligomers in the membrane. Interacts with SLC26A3, SLC26A6 and SHANK2. Interacts with NHERF1 and MYO6. Interacts (via C-terminus) with GOPC (via PDZ domain); this promotes CFTR internalization and thereby decreases channel activity. Interacts with SLC4A7 through NHERF1. Found in a complex with MYO5B and RAB11A. Interacts with ANO1. Interacts with SLC26A8. Interacts with AHCYL1; the interaction increases CFTR activity. Interacts with CSE1L. The core-glycosylated form interacts with GORASP2 (via PDZ GRASP-type 1 domain) in respone to ER stress. Interacts with MARCHF2; the interaction leads to CFTR ubiqtuitination and degradation. Interacts with ADGRG2. Post-translationally, N-glycosylated. In terms of processing, phosphorylated; cAMP treatment promotes phosphorylation and activates the channel. Dephosphorylation decreases the ATPase activity (in vitro). Phosphorylation at PKA sites activates the channel. Phosphorylation at PKC sites enhances the response to phosphorylation by PKA. Phosphorylated by AMPK; this inhibits channel activity. Ubiquitinated, leading to its degradation in the lysosome. Deubiquitination by USP10 in early endosomes enhances its endocytic recycling to the cell membrane. Ubiquitinated by RNF185 during ER stress. Ubiquitinated by MARCHF2. As to expression, expressed in the respiratory airway, including bronchial epithelium, and in the female reproductive tract, including oviduct (at protein level). Detected in pancreatic intercalated ducts in the exocrine tissue, on epithelial cells in intralobular striated ducts in sublingual salivary glands, on apical membranes of crypt cells throughout the small and large intestine, and on the reabsorptive duct in eccrine sweat glands. Detected on the equatorial segment of the sperm head (at protein level). Detected in nasal and bronchial superficial epithelium. Expressed by the central cells on the sebaceous glands, dermal adipocytes and, at lower levels, by epithelial cells.

The protein localises to the apical cell membrane. It is found in the early endosome membrane. It localises to the cell membrane. Its subcellular location is the recycling endosome membrane. The protein resides in the endoplasmic reticulum membrane. The protein localises to the nucleus. It carries out the reaction ATP + H2O + closed Cl(-) channel = ADP + phosphate + open Cl(-) channel.. The catalysed reaction is chloride(in) = chloride(out). The enzyme catalyses hydrogencarbonate(in) = hydrogencarbonate(out). It catalyses the reaction ATP + H2O = ADP + phosphate + H(+). Its function is as follows. Epithelial ion channel that plays an important role in the regulation of epithelial ion and water transport and fluid homeostasis. Mediates the transport of chloride ions across the cell membrane. Possesses an intrinsic ATPase activity and utilizes ATP to gate its channel; the passive flow of anions through the channel is gated by cycles of ATP binding and hydrolysis by the ATP-binding domains. The ion channel is also permeable to HCO(3)(-); selectivity depends on the extracellular chloride concentration. In vitro, mediates ATP-dependent glutathione flux. Exerts its function also by modulating the activity of other ion channels and transporters. Plays an important role in airway fluid homeostasis. Contributes to the regulation of the pH and the ion content of the airway surface fluid layer and thereby plays an important role in defense against pathogens. Modulates the activity of the epithelial sodium channel (ENaC) complex, in part by regulating the cell surface expression of the ENaC complex. Inhibits the activity of the ENaC channel containing subunits SCNN1A, SCNN1B and SCNN1G. Inhibits the activity of the ENaC channel containing subunits SCNN1D, SCNN1B and SCNN1G, but not of the ENaC channel containing subunits SCNN1A, SCNN1B and SCNN1G. May regulate bicarbonate secretion and salvage in epithelial cells by regulating the transporter SLC4A7. Can inhibit the chloride channel activity of ANO1. Plays a role in the chloride and bicarbonate homeostasis during sperm epididymal maturation and capacitation. In Homo sapiens (Human), this protein is Cystic fibrosis transmembrane conductance regulator.